The following is a 501-amino-acid chain: 7-alpha-hydroxycholest-4-en-3-one 12-alpha-hydroxylase (501 aa).

The chain crosses the membrane as a helical span at residues 1–21 (MVLWGPVLGALLVVIAGYLCL). Ser-326 carries the phosphoserine modification. Residue Cys-440 coordinates heme.

Belongs to the cytochrome P450 family. The cofactor is heme. Liver.

The protein localises to the endoplasmic reticulum membrane. It is found in the microsome membrane. The enzyme catalyses 7alpha-hydroxycholest-4-en-3-one + reduced [NADPH--hemoprotein reductase] + O2 = 7alpha,12alpha-dihydroxycholest-4-en-3-one + oxidized [NADPH--hemoprotein reductase] + H2O + H(+). It catalyses the reaction 5beta-cholestane-3alpha,7alpha-diol + reduced [NADPH--hemoprotein reductase] + O2 = 5beta-cholestane-3alpha,7alpha,12alpha-triol + oxidized [NADPH--hemoprotein reductase] + H2O + H(+). It carries out the reaction chenodeoxycholate + reduced [NADPH--hemoprotein reductase] + O2 = cholate + oxidized [NADPH--hemoprotein reductase] + H2O + H(+). It functions in the pathway lipid metabolism; bile acid biosynthesis. Functionally, a cytochrome P450 monooxygenase involved in primary bile acid biosynthesis. Catalyzes the 12alpha-hydroxylation of 7alpha-hydroxy-4-cholesten-3-one, an intermediate metabolite in cholic acid biosynthesis. Controls biliary balance of cholic acid and chenodeoxycholic acid, ultimately regulating the intestinal absorption of dietary lipids. Mechanistically, uses molecular oxygen inserting one oxygen atom into a substrate, and reducing the second into a water molecule, with two electrons provided by NADPH via cytochrome P450 reductase (CPR; NADPH--hemoprotein reductase). This chain is 7-alpha-hydroxycholest-4-en-3-one 12-alpha-hydroxylase, found in Homo sapiens (Human).